The sequence spans 435 residues: Glutamate-1-semialdehyde 2,1-aminomutase (435 aa).

Position 266 is an N6-(pyridoxal phosphate)lysine (Lys266).

It belongs to the class-III pyridoxal-phosphate-dependent aminotransferase family. HemL subfamily. In terms of assembly, homodimer. The cofactor is pyridoxal 5'-phosphate.

Its subcellular location is the cytoplasm. It catalyses the reaction (S)-4-amino-5-oxopentanoate = 5-aminolevulinate. It participates in porphyrin-containing compound metabolism; protoporphyrin-IX biosynthesis; 5-aminolevulinate from L-glutamyl-tRNA(Glu): step 2/2. The sequence is that of Glutamate-1-semialdehyde 2,1-aminomutase from Coxiella burnetii (strain RSA 331 / Henzerling II).